The primary structure comprises 224 residues: UPF0758 protein PD_0117 (224 aa).

Positions 102–224 (SIHDPISAGR…PVSFAEHGWL (123 aa)) constitute an MPN domain. Zn(2+) is bound by residues His-173, His-175, and Asp-186. The short motif at 173-186 (HNHPSGNREPSPAD) is the JAMM motif element.

It belongs to the UPF0758 family.

The sequence is that of UPF0758 protein PD_0117 from Xylella fastidiosa (strain Temecula1 / ATCC 700964).